We begin with the raw amino-acid sequence, 307 residues long: Myeloid-associated differentiation marker-like protein 2 (307 aa).

2 consecutive MARVEL domains span residues 17-154 (AVTS…ARPG) and 159-303 (YMAT…RIRF). 7 helical membrane passes run 53–73 (FCVA…ACEF), 90–110 (AFAM…PLYF), 129–149 (LAAS…VALT), 163–183 (VSGL…GALV), 198–218 (VAVY…SVLG), 232–252 (VVYT…WPVF), and 278–298 (LVVA…LAYS).

It belongs to the MAL family.

It is found in the membrane. The polypeptide is Myeloid-associated differentiation marker-like protein 2 (MYADML2) (Bos taurus (Bovine)).